We begin with the raw amino-acid sequence, 621 residues long: Chaperone protein HtpG (621 aa).

An a; substrate-binding region spans residues 1-328 (MTQEKKKFDA…SEDLPLNISR (328 aa)). Residues 329–544 (ESLQHNNVLE…DTAMDIRMER (216 aa)) form a b region. Positions 545-621 (FLIEQKQIAS…LNDILQKAIL (77 aa)) are c.

This sequence belongs to the heat shock protein 90 family. Homodimer.

The protein localises to the cytoplasm. Its function is as follows. Molecular chaperone. Has ATPase activity. In Rickettsia typhi (strain ATCC VR-144 / Wilmington), this protein is Chaperone protein HtpG.